Here is a 361-residue protein sequence, read N- to C-terminus: Cytochrome P450 family protein EryCII (361 aa).

Belongs to the cytochrome P450 family. As to quaternary structure, heterotetramer composed of EryCII and EryCIII.

It participates in antibiotic biosynthesis; erythromycin biosynthesis. Involved in the erythromycin biosynthesis pathway. Acts by forming a complex and stabilizing the desosaminyl transferase EryCIII. The chain is Cytochrome P450 family protein EryCII (eryCII) from Saccharopolyspora erythraea (strain ATCC 11635 / DSM 40517 / JCM 4748 / NBRC 13426 / NCIMB 8594 / NRRL 2338).